A 317-amino-acid chain; its full sequence is WSCD family member CG9164 (317 aa).

A helical transmembrane segment spans residues 8 to 28 (FFGVSATIIIYIGGVLFLSMN). N151, N227, and N233 each carry an N-linked (GlcNAc...) asparagine glycan.

This sequence belongs to the WSCD family.

It localises to the membrane. The chain is WSCD family member CG9164 from Drosophila melanogaster (Fruit fly).